The sequence spans 1679 residues: Maestro heat-like repeat-containing protein family member 2A (1679 aa).

15 HEAT repeats span residues 68 to 91 (ATTDPCVVMNALIRCLQMPEISTQ), 92 to 128 (RKMNIYNIMQEIIQQEGEMEEHCIQRLVAIASKQMRD), 190 to 229 (MPYMGITLATIFTMLRLANEAKMRQVICSAMETFCETVQF), 293 to 313 (EQVYDYIPLLLAEFQGTGHWP), 314 to 350 (LFPSLLQVLRQILEASVTTNTPIPPMLLHPIFTELHV), 380 to 417 (SYPKELMKFFFSQVEMSKEAVRVGTLALIRAVVSADDP), 422 to 459 (KTIYLAIRVVKNTLSDTRSKVRMAILRIIGQLVLSGFQ), 571 to 610 (PAPQKLLARLLVLMSSPYKGEGRGIAMLNLLRTLSQSIAP), 614 to 654 (DMWE…SLKK), 737 to 774 (KTVLNVLQDFEERIQESEQSWQIGAWRKDHPWRRETVK), 848 to 887 (SALTGLIVVIIKAEPPDHLVSPVRSMAMDALSQLSTMKPF), 991 to 1028 (GQFGVLVGLIAPCTCDAHRRTRLASINVLSSLLDLHVS), 1219 to 1261 (DPLM…SHGP), 1387 to 1425 (KLLRPVVLMLEKGAGQDKDETLQVLSLRALGNMALGAPR), and 1632 to 1669 (MDLVGLRNSLQDLQLDSDAGVRRAALETLKVLDSCNQH).

The polypeptide is Maestro heat-like repeat-containing protein family member 2A (Mroh2a) (Mus musculus (Mouse)).